A 260-amino-acid chain; its full sequence is 5'-nucleotidase SurE (260 aa).

A divalent metal cation contacts are provided by Asp-8, Asp-9, Ser-39, and Asn-93.

The protein belongs to the SurE nucleotidase family. It depends on a divalent metal cation as a cofactor.

It localises to the cytoplasm. It catalyses the reaction a ribonucleoside 5'-phosphate + H2O = a ribonucleoside + phosphate. Its function is as follows. Nucleotidase that shows phosphatase activity on nucleoside 5'-monophosphates. The sequence is that of 5'-nucleotidase SurE from Thermofilum pendens (strain DSM 2475 / Hrk 5).